We begin with the raw amino-acid sequence, 512 residues long: Histidine ammonia-lyase (512 aa).

A cross-link (5-imidazolinone (Ala-Gly)) is located at residues 142–144 (ASG). Ser-143 is subject to 2,3-didehydroalanine (Ser).

It belongs to the PAL/histidase family. Contains an active site 4-methylidene-imidazol-5-one (MIO), which is formed autocatalytically by cyclization and dehydration of residues Ala-Ser-Gly.

Its subcellular location is the cytoplasm. The catalysed reaction is L-histidine = trans-urocanate + NH4(+). It participates in amino-acid degradation; L-histidine degradation into L-glutamate; N-formimidoyl-L-glutamate from L-histidine: step 1/3. This chain is Histidine ammonia-lyase, found in Allorhizobium ampelinum (strain ATCC BAA-846 / DSM 112012 / S4) (Agrobacterium vitis (strain S4)).